The following is a 199-amino-acid chain: 7-methyl-GTP pyrophosphatase (199 aa).

The Proton acceptor role is filled by D74.

This sequence belongs to the Maf family. YceF subfamily. Requires a divalent metal cation as cofactor.

The protein localises to the cytoplasm. The catalysed reaction is N(7)-methyl-GTP + H2O = N(7)-methyl-GMP + diphosphate + H(+). Functionally, nucleoside triphosphate pyrophosphatase that hydrolyzes 7-methyl-GTP (m(7)GTP). May have a dual role in cell division arrest and in preventing the incorporation of modified nucleotides into cellular nucleic acids. This chain is 7-methyl-GTP pyrophosphatase, found in Cupriavidus pinatubonensis (strain JMP 134 / LMG 1197) (Cupriavidus necator (strain JMP 134)).